We begin with the raw amino-acid sequence, 388 residues long: Processive diacylglycerol beta-glucosyltransferase (388 aa).

Belongs to the glycosyltransferase 28 family. UgtP subfamily.

It is found in the cell membrane. It catalyses the reaction a 1,2-diacyl-3-O-(beta-D-glucopyranosyl)-sn-glycerol + UDP-alpha-D-glucose = a 1,2-diacyl-3-O-(beta-D-Glc-(1-&gt;6)-beta-D-Glc)-sn-glycerol + UDP + H(+). The catalysed reaction is a 1,2-diacyl-3-O-(beta-D-Glc-(1-&gt;6)-beta-D-Glc)-sn-glycerol + UDP-alpha-D-glucose = a 1,2-diacyl-3-O-(beta-D-Glc-(1-&gt;6)-beta-D-Glc-(1-&gt;6)-beta-D-Glc)-sn-glycerol + UDP + H(+). It carries out the reaction a 1,2-diacyl-sn-glycerol + UDP-alpha-D-glucose = a 1,2-diacyl-3-O-(beta-D-glucopyranosyl)-sn-glycerol + UDP + H(+). It functions in the pathway glycolipid metabolism; diglucosyl-diacylglycerol biosynthesis. Processive glucosyltransferase involved in the biosynthesis of both the bilayer- and non-bilayer-forming membrane glucolipids. Is able to successively transfer up to three glucosyl residues to diacylglycerol (DAG), thereby catalyzing the formation of beta-monoglucosyl-DAG (3-O-(beta-D-glucopyranosyl)-1,2-diacyl-sn-glycerol), beta-diglucosyl-DAG (3-O-(beta-D-glucopyranosyl-beta-(1-&gt;6)-D-glucopyranosyl)-1,2-diacyl-sn-glycerol) and beta-triglucosyl-DAG (3-O-(beta-D-glucopyranosyl-beta-(1-&gt;6)-D-glucopyranosyl-beta-(1-&gt;6)-D-glucopyranosyl)-1,2-diacyl-sn-glycerol). Beta-diglucosyl-DAG is the predominant glycolipid found in Bacillales and is also used as a membrane anchor for lipoteichoic acid (LTA). The sequence is that of Processive diacylglycerol beta-glucosyltransferase from Bacillus cereus (strain 03BB102).